The sequence spans 306 residues: GTP-binding protein RAD (306 aa).

Residues 1 to 13 (MTLNGGSGAGGSR) show a composition bias toward gly residues. Residues 1-91 (MTLNGGSGAG…GDSGSEDGVY (91 aa)) form a disordered region. R23 carries the post-translational modification Omega-N-methylarginine. Position 25 is a phosphoserine (S25). Residues 56-88 (AATAAGTRTQGQRLDWPEGSSDSLSSGDSGSED) are compositionally biased toward low complexity. Residues 97–104 (GAPGVGKS) and 201–204 (NKSD) each bind GTP. The tract at residues 276–295 (AKLFLGRIVARNSRKMAFLA) is calmodulin-binding.

It belongs to the small GTPase superfamily. RGK family. In terms of assembly, interacts with Calmodulin preferentially in the inactive, GDP-bound form. Interacts with CAMK2D. Interacts with CACNB2; interaction may be involved in beta-adrenergic regulation of heart rate and contractile force. Interaction with CACNB2 regulates the trafficking of CACNA1C to the cell membrane.

The protein localises to the cell membrane. May regulate basal voltage-dependent L-type Ca(2+) currents and be required for beta-adrenergic augmentation of Ca(2+) influx in cardiomyocytes, thereby regulating increases in heart rate and contractile force. May play an important role in cardiac antiarrhythmia via the strong suppression of voltage-dependent L-type Ca(2+) currents. Regulates voltage-gated L-type calcium channel subunit alpha-1C trafficking to the cell membrane. Inhibits cardiac hypertrophy through the calmodulin-dependent kinase II (CaMKII) pathway. Inhibits phosphorylation and activation of CAMK2D. The chain is GTP-binding protein RAD (Rrad) from Rattus norvegicus (Rat).